We begin with the raw amino-acid sequence, 86 residues long: Small ribosomal subunit protein bS20 (86 aa).

Residues 1 to 25 (MANIKSQIKRNKQNEKRHERNKAVK) are disordered. Basic and acidic residues predominate over residues 12–22 (KQNEKRHERNK).

This sequence belongs to the bacterial ribosomal protein bS20 family.

In terms of biological role, binds directly to 16S ribosomal RNA. The sequence is that of Small ribosomal subunit protein bS20 from Nocardioides sp. (strain ATCC BAA-499 / JS614).